The chain runs to 523 residues: 2-isopropylmalate synthase (523 aa).

The region spanning 5–267 (VIIFDTTLRD…HTRINHQEIW (263 aa)) is the Pyruvate carboxyltransferase domain. Residues Asp-14, His-202, His-204, and Asn-238 each coordinate Mn(2+). The segment at 392–523 (RLEYFSVQSG…QNKEHNQETV (132 aa)) is regulatory domain.

It belongs to the alpha-IPM synthase/homocitrate synthase family. LeuA type 1 subfamily. In terms of assembly, homodimer. Requires Mn(2+) as cofactor.

It localises to the cytoplasm. The catalysed reaction is 3-methyl-2-oxobutanoate + acetyl-CoA + H2O = (2S)-2-isopropylmalate + CoA + H(+). Its pathway is amino-acid biosynthesis; L-leucine biosynthesis; L-leucine from 3-methyl-2-oxobutanoate: step 1/4. In terms of biological role, catalyzes the condensation of the acetyl group of acetyl-CoA with 3-methyl-2-oxobutanoate (2-ketoisovalerate) to form 3-carboxy-3-hydroxy-4-methylpentanoate (2-isopropylmalate). This chain is 2-isopropylmalate synthase, found in Cronobacter sakazakii (strain ATCC BAA-894) (Enterobacter sakazakii).